Reading from the N-terminus, the 582-residue chain is Beta-glucosidase 28 (582 aa).

The first 21 residues, 1–21 (MKMHFFILLVITSWLSEKITS), serve as a signal peptide directing secretion. A beta-D-glucoside-binding positions include Gln-48, His-151, and 196 to 197 (NE). The active-site Proton donor is Glu-197. A disulfide bridge links Cys-216 with Cys-224. N-linked (GlcNAc...) asparagine glycans are attached at residues Asn-255 and Asn-330. Tyr-340 provides a ligand contact to a beta-D-glucoside. Asn-370 is a glycosylation site (N-linked (GlcNAc...) asparagine). Glu-412 contributes to the a beta-D-glucoside binding site. Glu-412 functions as the Nucleophile in the catalytic mechanism. Asn-430 is a glycosylation site (N-linked (GlcNAc...) asparagine). A beta-D-glucoside is bound by residues Trp-462, 469–470 (EW), and Phe-478. Asn-521 and Asn-544 each carry an N-linked (GlcNAc...) asparagine glycan.

This sequence belongs to the glycosyl hydrolase 1 family.

The enzyme catalyses Hydrolysis of terminal, non-reducing beta-D-glucosyl residues with release of beta-D-glucose.. This chain is Beta-glucosidase 28, found in Arabidopsis thaliana (Mouse-ear cress).